The chain runs to 109 residues: MTDLEFMDHAEKLLLAVERSCDRINETTDADLDSQRSGGMLTLVFPNRSQIVINLQKPLHEVWMAARSGGYHYRFDGHAWQDSKGAGEFFACLGRDATVQSGRPLQFAA.

This sequence belongs to the frataxin family.

Its function is as follows. Involved in iron-sulfur (Fe-S) cluster assembly. May act as a regulator of Fe-S biogenesis. This is Iron-sulfur cluster assembly protein CyaY from Verminephrobacter eiseniae (strain EF01-2).